The primary structure comprises 124 residues: Small ribosomal subunit protein uS12 (124 aa).

The disordered stretch occupies residues 1–28 (MPTISQLIGSERKRLTRKTKSPALKSCP). Asp89 is modified (3-methylthioaspartic acid). The segment at 104–124 (TAGVKDRRQSRSKYGAKAPKD) is disordered.

This sequence belongs to the universal ribosomal protein uS12 family. In terms of assembly, part of the 30S ribosomal subunit. Contacts proteins S8 and S17. May interact with IF1 in the 30S initiation complex.

With S4 and S5 plays an important role in translational accuracy. In terms of biological role, interacts with and stabilizes bases of the 16S rRNA that are involved in tRNA selection in the A site and with the mRNA backbone. Located at the interface of the 30S and 50S subunits, it traverses the body of the 30S subunit contacting proteins on the other side and probably holding the rRNA structure together. The combined cluster of proteins S8, S12 and S17 appears to hold together the shoulder and platform of the 30S subunit. The sequence is that of Small ribosomal subunit protein uS12 from Prochlorococcus marinus (strain MIT 9312).